A 357-amino-acid chain; its full sequence is Large ribosomal subunit protein mL45 (357 aa).

The interval 333–357 is disordered; it reads EAKALPLRTTEKLEEAKKEKEQQEI. A compositionally biased stretch (basic and acidic residues) spans 341–357; the sequence is TTEKLEEAKKEKEQQEI.

Belongs to the mitochondrion-specific ribosomal protein mL45 family.

The protein localises to the mitochondrion. This is Large ribosomal subunit protein mL45 (mrpl-45) from Caenorhabditis elegans.